The sequence spans 456 residues: CCA-adding enzyme (456 aa).

ATP is bound by residues Ser53 and Lys56. Ser53 and Lys56 together coordinate CTP. Residues Asp65, Asp67, and Asp119 each coordinate Mg(2+). ATP is bound by residues His142, Lys161, and Tyr170. CTP contacts are provided by His142, Lys161, and Tyr170.

The protein belongs to the tRNA nucleotidyltransferase/poly(A) polymerase family. Archaeal CCA-adding enzyme subfamily. Homodimer. It depends on Mg(2+) as a cofactor.

The enzyme catalyses a tRNA precursor + 2 CTP + ATP = a tRNA with a 3' CCA end + 3 diphosphate. It carries out the reaction a tRNA with a 3' CCA end + 2 CTP + ATP = a tRNA with a 3' CCACCA end + 3 diphosphate. In terms of biological role, catalyzes the addition and repair of the essential 3'-terminal CCA sequence in tRNAs without using a nucleic acid template. Adds these three nucleotides in the order of C, C, and A to the tRNA nucleotide-73, using CTP and ATP as substrates and producing inorganic pyrophosphate. tRNA 3'-terminal CCA addition is required both for tRNA processing and repair. Also involved in tRNA surveillance by mediating tandem CCA addition to generate a CCACCA at the 3' terminus of unstable tRNAs. While stable tRNAs receive only 3'-terminal CCA, unstable tRNAs are marked with CCACCA and rapidly degraded. This chain is CCA-adding enzyme, found in Thermococcus kodakarensis (strain ATCC BAA-918 / JCM 12380 / KOD1) (Pyrococcus kodakaraensis (strain KOD1)).